Consider the following 126-residue polypeptide: Holo-[acyl-carrier-protein] synthase (126 aa).

The Mg(2+) site is built by aspartate 9 and glutamate 58.

It belongs to the P-Pant transferase superfamily. AcpS family. Mg(2+) is required as a cofactor.

The protein localises to the cytoplasm. It carries out the reaction apo-[ACP] + CoA = holo-[ACP] + adenosine 3',5'-bisphosphate + H(+). In terms of biological role, transfers the 4'-phosphopantetheine moiety from coenzyme A to a Ser of acyl-carrier-protein. The sequence is that of Holo-[acyl-carrier-protein] synthase from Pectobacterium atrosepticum (strain SCRI 1043 / ATCC BAA-672) (Erwinia carotovora subsp. atroseptica).